The sequence spans 69 residues: Cold shock-like protein CspC (69 aa).

A CSD domain is found at 6–66; the sequence is GQVKWFNESK…GQKGPAAVNV (61 aa).

The protein localises to the cytoplasm. This chain is Cold shock-like protein CspC (cspC), found in Escherichia coli O157:H7.